A 394-amino-acid chain; its full sequence is Guanine nucleotide-binding protein G(s) subunit alpha isoforms short (394 aa).

Positions 1 to 23 are disordered; sequence MGCLGNSKTEDQRNEEKAQREAN. A lipid anchor (N-palmitoyl glycine) is attached at Gly2. A lipid anchor (S-palmitoyl cysteine) is attached at Cys3. Residues 8-23 show a composition bias toward basic and acidic residues; sequence KTEDQRNEEKAQREAN. One can recognise a G-alpha domain in the interval 39–394; sequence ATHRLLLLGA…RMHLRQYELL (356 aa). A G1 motif region spans residues 42-55; that stretch reads RLLLLGAGESGKST. Residue 47–55 coordinates GTP; the sequence is GAGESGKST. Ser54 serves as a coordination point for Mg(2+). The interval 68–91 is disordered; sequence FNGEGGEEDPQAARSNSDGEKATK. The G2 motif stretch occupies residues 196 to 204; sequence DLLRCRVLT. GTP is bound by residues 197-204, 223-227, and 292-295; these read LLRCRVLT, DVGGQ, and NKQD. Residue Thr204 participates in Mg(2+) binding. Positions 219–228 are G3 motif; that stretch reads FHMFDVGGQR. The interval 288-295 is G4 motif; that stretch reads ILFLNKQD. Residue Lys300 forms a Glycyl lysine isopeptide (Lys-Gly) (interchain with G-Cter in ubiquitin) linkage. Phosphoserine is present on Ser352. The tract at residues 364-369 is G5 motif; the sequence is TCAVDT. Ala366 provides a ligand contact to GTP.

This sequence belongs to the G-alpha family. G(s) subfamily. As to quaternary structure, heterotrimeric G proteins are composed of 3 units; alpha, beta and gamma. The alpha chain contains the guanine nucleotide binding site. Component of the TAS2R14-GNAS2 complex, consisting of TAS2R14, GNAS2, GNB1 and GNG2; within the complex interacts with TAS2R14; this complex plays a role in the perception of bitterness. Interacts with CRY1; the interaction may block GPCR-mediated regulation of cAMP concentrations. Interacts with ADCY6 and stimulates its adenylyl cyclase activity. Interacts with ADCY2 and ADCY5. Stimulates the ADCY5 adenylyl cyclase activity. Interacts (GDP-bound form) with RIC8B; promoting GNAS folding and association with the plasma membrane. Interaction with SASH1. Interacts with GASL2L2.

The protein resides in the cell membrane. It catalyses the reaction GTP + H2O = GDP + phosphate + H(+). Its function is as follows. Guanine nucleotide-binding proteins (G proteins) function as transducers in numerous signaling pathways controlled by G protein-coupled receptors (GPCRs). The alpha chain contains the guanine nucleotide binding site and alternates between an active, GTP-bound state and an inactive, GDP-bound state. Signaling by an activated GPCR promotes GDP release and GTP binding. The alpha subunit has a low GTPase activity that converts bound GTP to GDP, thereby terminating the signal. Both GDP release and GTP hydrolysis are modulated by numerous regulatory proteins. Signaling involves the activation of adenylyl cyclases, resulting in increased levels of the signaling molecule cAMP. Functions downstream of beta-adrenergic receptors. Stimulates the Ras signaling pathway via RAPGEF2. The polypeptide is Guanine nucleotide-binding protein G(s) subunit alpha isoforms short (GNAS) (Bos taurus (Bovine)).